Here is a 144-residue protein sequence, read N- to C-terminus: Large ribosomal subunit protein uL16 (144 aa).

Positions 1–17 (MLQPKKTKFRRQQKGRA) are enriched in basic residues. A disordered region spans residues 1–22 (MLQPKKTKFRRQQKGRAKGNAQ).

It belongs to the universal ribosomal protein uL16 family. In terms of assembly, part of the 50S ribosomal subunit.

Functionally, binds 23S rRNA and is also seen to make contacts with the A and possibly P site tRNAs. The protein is Large ribosomal subunit protein uL16 of Bacteroides thetaiotaomicron (strain ATCC 29148 / DSM 2079 / JCM 5827 / CCUG 10774 / NCTC 10582 / VPI-5482 / E50).